Consider the following 179-residue polypeptide: Peptide methionine sulfoxide reductase MsrA (179 aa).

C14 is an active-site residue.

Belongs to the MsrA Met sulfoxide reductase family.

It catalyses the reaction L-methionyl-[protein] + [thioredoxin]-disulfide + H2O = L-methionyl-(S)-S-oxide-[protein] + [thioredoxin]-dithiol. It carries out the reaction [thioredoxin]-disulfide + L-methionine + H2O = L-methionine (S)-S-oxide + [thioredoxin]-dithiol. Its function is as follows. Has an important function as a repair enzyme for proteins that have been inactivated by oxidation. Catalyzes the reversible oxidation-reduction of methionine sulfoxide in proteins to methionine. This Nitrobacter winogradskyi (strain ATCC 25391 / DSM 10237 / CIP 104748 / NCIMB 11846 / Nb-255) protein is Peptide methionine sulfoxide reductase MsrA.